Reading from the N-terminus, the 585-residue chain is Parathyroid hormone/parathyroid hormone-related peptide receptor (585 aa).

Positions 1 to 26 are cleaved as a signal peptide; the sequence is MGAARIAPGLALLLCCPVLSSAYALV. The Extracellular portion of the chain corresponds to 27–184; sequence DADDVMTKEE…REREVFDRLG (158 aa). Disulfide bonds link cysteine 48-cysteine 113, cysteine 104-cysteine 144, and cysteine 127-cysteine 166. The disordered stretch occupies residues 66 to 100; it reads DKGWASAPTSGKPRKEKASGKLYPESGEDTGSRHQ. 4 N-linked (GlcNAc...) asparagine glycosylation sites follow: asparagine 147, asparagine 157, asparagine 162, and asparagine 172. A helical membrane pass occupies residues 185-208; it reads MIYTVGYSVSLASLTVAVLILAYF. Topologically, residues 209–215 are cytoplasmic; it reads RRLHCTR. Residues 216 to 235 traverse the membrane as a helical segment; sequence NYIHMHLFLSFMLRAVSIFV. Residues 236–277 lie on the Extracellular side of the membrane; sequence KDAVLYSGATLDEAERLTEEELRAIAQAPLPPVAATSYVGCR. Residues 278–301 traverse the membrane as a helical segment; it reads VAVTFFLYFLATNYYWILVEGLYL. Residues 302–315 lie on the Cytoplasmic side of the membrane; that stretch reads HSLIFMAFFSEKKY. Residues 316-337 traverse the membrane as a helical segment; it reads LWGFTVFGWGLPAIFVAVWVSV. The Extracellular segment spans residues 338 to 356; the sequence is RATLANTGCWDLSSGNKKW. A helical membrane pass occupies residues 357-377; the sequence is IIQVPILASIVLNFILFINIV. Topologically, residues 378–404 are cytoplasmic; the sequence is RVLATKLRETNAGRCDTRQQYRKLLKS. A helical transmembrane segment spans residues 405 to 423; sequence TLVLMPLFGVHYIVFMATP. The Extracellular segment spans residues 424-435; it reads YTEVSGTLWQVQ. The chain crosses the membrane as a helical span at residues 436–458; that stretch reads MHYEMLFNSFQGFFVAIIYCFCN. Over 459-585 the chain is Cytoplasmic; that stretch reads GEVQAEIKKS…LLQEEWETVM (127 aa). The short motif at 469–472 is the Important for interaction with G proteins element; it reads WSRW. Threonine 543 carries the post-translational modification Phosphothreonine.

It belongs to the G-protein coupled receptor 2 family. In terms of assembly, homodimer in the absence of bound ligand. Peptide hormone binding leads to dissociation of the homodimer. In terms of processing, N-glycosylated.

It localises to the cell membrane. In terms of biological role, G-protein-coupled receptor for parathyroid hormone (PTH) and for parathyroid hormone-related peptide (PTHLH). Ligand binding causes a conformation change that triggers signaling via guanine nucleotide-binding proteins (G proteins) and modulates the activity of downstream effectors, such as adenylate cyclase (cAMP). PTH1R is coupled to G(s) G alpha proteins and mediates activation of adenylate cyclase activity. PTHLH dissociates from PTH1R more rapidly than PTH; as consequence, the cAMP response induced by PTHLH decays faster than the response induced by PTH. This Sus scrofa (Pig) protein is Parathyroid hormone/parathyroid hormone-related peptide receptor (PTH1R).